Here is a 179-residue protein sequence, read N- to C-terminus: ATP-dependent protease subunit HslV (179 aa).

The active site involves T7. Residues G162, C165, and T168 each coordinate Na(+).

It belongs to the peptidase T1B family. HslV subfamily. As to quaternary structure, a double ring-shaped homohexamer of HslV is capped on each side by a ring-shaped HslU homohexamer. The assembly of the HslU/HslV complex is dependent on binding of ATP.

It localises to the cytoplasm. The enzyme catalyses ATP-dependent cleavage of peptide bonds with broad specificity.. Its activity is regulated as follows. Allosterically activated by HslU binding. Its function is as follows. Protease subunit of a proteasome-like degradation complex believed to be a general protein degrading machinery. The sequence is that of ATP-dependent protease subunit HslV from Saccharophagus degradans (strain 2-40 / ATCC 43961 / DSM 17024).